Reading from the N-terminus, the 293-residue chain is Probable endonuclease 4 (293 aa).

Residues His78, His118, Glu154, Asp188, His191, His225, Asp238, His240, and Glu270 each contribute to the Zn(2+) site.

It belongs to the AP endonuclease 2 family. The cofactor is Zn(2+).

The enzyme catalyses Endonucleolytic cleavage to 5'-phosphooligonucleotide end-products.. In terms of biological role, endonuclease IV plays a role in DNA repair. It cleaves phosphodiester bonds at apurinic or apyrimidinic (AP) sites, generating a 3'-hydroxyl group and a 5'-terminal sugar phosphate. The protein is Probable endonuclease 4 of Vibrio vulnificus (strain CMCP6).